The primary structure comprises 123 residues: Small ribosomal subunit protein uS12 (123 aa).

Residues 1-30 (MPTIQQLIRKPRQPKVQRSKSQHLQSCPQK) are disordered. A compositionally biased stretch (basic residues) spans 9–21 (RKPRQPKVQRSKS). Asp-89 carries the post-translational modification 3-methylthioaspartic acid.

It belongs to the universal ribosomal protein uS12 family. Part of the 30S ribosomal subunit. Contacts proteins S8 and S17. May interact with IF1 in the 30S initiation complex.

In terms of biological role, with S4 and S5 plays an important role in translational accuracy. Functionally, interacts with and stabilizes bases of the 16S rRNA that are involved in tRNA selection in the A site and with the mRNA backbone. Located at the interface of the 30S and 50S subunits, it traverses the body of the 30S subunit contacting proteins on the other side and probably holding the rRNA structure together. The combined cluster of proteins S8, S12 and S17 appears to hold together the shoulder and platform of the 30S subunit. This Paracoccus denitrificans (strain Pd 1222) protein is Small ribosomal subunit protein uS12.